A 149-amino-acid chain; its full sequence is Small ribosomal subunit protein bS6 (149 aa).

Residues 94 to 149 (EKHEEGPSAMMQKRDRDDRPRRDGDRPDRGGFGDRGPRPDRGDRDDRPRRPREDRA) are disordered.

The protein belongs to the bacterial ribosomal protein bS6 family.

In terms of biological role, binds together with bS18 to 16S ribosomal RNA. In Sinorhizobium fredii (strain NBRC 101917 / NGR234), this protein is Small ribosomal subunit protein bS6.